The following is a 118-amino-acid chain: Small ribosomal subunit protein uS13 (118 aa).

The disordered stretch occupies residues 91 to 118; it reads HRRSLPVRGQRTKTNARTRKGPRKPIRK.

It belongs to the universal ribosomal protein uS13 family. In terms of assembly, part of the 30S ribosomal subunit. Forms a loose heterodimer with protein S19. Forms two bridges to the 50S subunit in the 70S ribosome.

Its function is as follows. Located at the top of the head of the 30S subunit, it contacts several helices of the 16S rRNA. In the 70S ribosome it contacts the 23S rRNA (bridge B1a) and protein L5 of the 50S subunit (bridge B1b), connecting the 2 subunits; these bridges are implicated in subunit movement. Contacts the tRNAs in the A and P-sites. This Marinomonas sp. (strain MWYL1) protein is Small ribosomal subunit protein uS13.